Reading from the N-terminus, the 445-residue chain is Chromosome partition protein MukF (445 aa).

The segment at 213 to 241 (LSETSATLRELQDTLQAAGDELQTQILDI) is leucine-zipper.

Belongs to the MukF family. Interacts, and probably forms a ternary complex, with MukE and MukB via its C-terminal region. The complex formation is stimulated by calcium or magnesium. It is required for an interaction between MukE and MukB.

The protein resides in the cytoplasm. Its subcellular location is the nucleoid. Its function is as follows. Involved in chromosome condensation, segregation and cell cycle progression. May participate in facilitating chromosome segregation by condensation DNA from both sides of a centrally located replisome during cell division. Not required for mini-F plasmid partitioning. Probably acts via its interaction with MukB and MukE. Overexpression results in anucleate cells. It has a calcium binding activity. This chain is Chromosome partition protein MukF, found in Vibrio cholerae serotype O1 (strain ATCC 39315 / El Tor Inaba N16961).